Consider the following 181-residue polypeptide: Nucleoside diphosphate kinase, mitochondrial (181 aa).

Positions 1-10 (MFRGGTHRLR) are enriched in basic residues. The interval 1 to 22 (MFRGGTHRLRGQPGLSLPHGPR) is disordered. The N-terminal 24 residues, 1–24 (MFRGGTHRLRGQPGLSLPHGPRCY), are a transit peptide targeting the mitochondrion. ATP-binding residues include K40, F88, R116, T122, R133, and N143. The Pros-phosphohistidine intermediate role is filled by H146.

The protein belongs to the NDK family. The cofactor is Mg(2+). As to expression, highest levels in the liver and kidney with lower levels in the heart, brain and breast muscle.

The protein localises to the mitochondrion intermembrane space. It localises to the mitochondrion matrix. It catalyses the reaction a 2'-deoxyribonucleoside 5'-diphosphate + ATP = a 2'-deoxyribonucleoside 5'-triphosphate + ADP. The catalysed reaction is a ribonucleoside 5'-diphosphate + ATP = a ribonucleoside 5'-triphosphate + ADP. With respect to regulation, feedback inhibition by ADP. Its function is as follows. Major role in the synthesis of nucleoside triphosphates other than ATP. The ATP gamma phosphate is transferred to the NDP beta phosphate via a ping-pong mechanism, using a phosphorylated active-site intermediate. Through the catalyzed exchange of gamma-phosphate between di- and triphosphonucleosides participates in regulation of intracellular nucleotide homeostasis. Binds to anionic phospholipids, predominantly to cardiolipin; the binding inhibits its phosphotransfer activity. Acts as a mitochondria-specific NDK coupled to respiration. Promotes the redistribution of cardiolipin between the mitochondrial inner membrane and outer membrane which is implicated in pro-apoptotic signaling. This is Nucleoside diphosphate kinase, mitochondrial (NME4) from Columba livia (Rock dove).